A 298-amino-acid chain; its full sequence is Quinolinate synthase (298 aa).

Iminosuccinate-binding residues include His-19 and Ser-36. Cys-81 is a binding site for [4Fe-4S] cluster. Residues 107 to 109 and Ser-124 contribute to the iminosuccinate site; that span reads YVN. Cys-168 serves as a coordination point for [4Fe-4S] cluster. Iminosuccinate-binding positions include 193–195 and Thr-210; that span reads HPE. [4Fe-4S] cluster is bound at residue Cys-254.

This sequence belongs to the quinolinate synthase family. Type 2 subfamily. Requires [4Fe-4S] cluster as cofactor.

The protein resides in the cytoplasm. The catalysed reaction is iminosuccinate + dihydroxyacetone phosphate = quinolinate + phosphate + 2 H2O + H(+). The protein operates within cofactor biosynthesis; NAD(+) biosynthesis; quinolinate from iminoaspartate: step 1/1. Its function is as follows. Catalyzes the condensation of iminoaspartate with dihydroxyacetone phosphate to form quinolinate. This Thermotoga petrophila (strain ATCC BAA-488 / DSM 13995 / JCM 10881 / RKU-1) protein is Quinolinate synthase.